A 156-amino-acid polypeptide reads, in one-letter code: MIP18 family protein galla-2 (156 aa).

This sequence belongs to the MIP18 family. Component of the CGX complex composed of crb, galla (galla-1 or galla-2) and Xpd. Interacts with crb (via intracellular domain). Also able to interact with Xpd in the absence of crb. Interacts with Mms19.

In terms of biological role, component of the crb-galla-Xpd (CGX) complex which is essential for proper mitotic chromosome segregation in early embryos. The CGX complex is also required for cell proliferation in developing wing disks. In the CGX complex, acts with crb to recruit Xpd thus forming the functional complex. The sequence is that of MIP18 family protein galla-2 from Drosophila melanogaster (Fruit fly).